We begin with the raw amino-acid sequence, 213 residues long: MKLTLVQIFFMMLLLLLGLGMGLGLGLQMAAAVLEDSDQSLNDFWSSDSQEKAETTKEGDGTRTTETLLLSNKGVVQPVWPEETILAEDEVGGNKMLRADALFQSDKDYLRLDLMNRECNSLMAHKVKKRNHTCIPEYTFIHEELDTVKAVCKNPVVACDLKGAKCHKSSRPFDLTFCKLSKPGQVTPHCNYLTFIFEKFIIISCNDMKVKIT.

An N-terminal signal peptide occupies residues 1–24; the sequence is MKLTLVQIFFMMLLLLLGLGMGLG. The N-linked (GlcNAc...) asparagine glycan is linked to asparagine 131.

Belongs to the pancreatic ribonuclease family. In terms of processing, the N-terminus is blocked. Glycosylated. As to expression, male-specific expression in proximal caput of the epididymis.

It localises to the secreted. Secreted proximal epididymal protein required for post-testicular sperm maturation and male fertility. May be involved in sperm adhesion to the egg zona pellucida. Does not have ribonuclease activity. The chain is Inactive ribonuclease-like protein 10 (RNASE10) from Equus caballus (Horse).